The sequence spans 487 residues: GTPase Der (487 aa).

2 consecutive EngA-type G domains span residues 2-164 and 203-374; these read KTIA…SLAK and IAVG…QRFA. GTP is bound by residues 8–15, 55–59, 116–119, 209–216, 256–260, and 320–323; these read GKPNVGKS, DTGGI, NKVD, GRVNVGKS, DTAGI, and NKWD. In terms of domain architecture, KH-like spans 375–459; sequence YRIPTSALND…PILLSVKGKN (85 aa). Residues 459–480 are compositionally biased toward basic and acidic residues; that stretch reads NAKDEENTSAKKESPSKVSHRE. Residues 459-487 are disordered; sequence NAKDEENTSAKKESPSKVSHRESKNRRFV.

This sequence belongs to the TRAFAC class TrmE-Era-EngA-EngB-Septin-like GTPase superfamily. EngA (Der) GTPase family. In terms of assembly, associates with the 50S ribosomal subunit.

Its function is as follows. GTPase that plays an essential role in the late steps of ribosome biogenesis. In Helicobacter hepaticus (strain ATCC 51449 / 3B1), this protein is GTPase Der.